The primary structure comprises 583 residues: Aspartate--tRNA ligase (583 aa).

Glu174 is a binding site for L-aspartate. The interval 198-201 (QITK) is aspartate. Arg220 provides a ligand contact to L-aspartate. ATP-binding positions include 220 to 222 (RDE) and Gln229. His443 is a binding site for L-aspartate. An ATP-binding site is contributed by Glu477. Arg484 is an L-aspartate binding site. 529-532 (GLDR) is an ATP binding site.

Belongs to the class-II aminoacyl-tRNA synthetase family. Type 1 subfamily. As to quaternary structure, homodimer.

It is found in the cytoplasm. It carries out the reaction tRNA(Asp) + L-aspartate + ATP = L-aspartyl-tRNA(Asp) + AMP + diphosphate. Catalyzes the attachment of L-aspartate to tRNA(Asp) in a two-step reaction: L-aspartate is first activated by ATP to form Asp-AMP and then transferred to the acceptor end of tRNA(Asp). This is Aspartate--tRNA ligase from Streptococcus thermophilus (strain ATCC BAA-250 / LMG 18311).